The sequence spans 244 residues: tRNA (guanine-N(1)-)-methyltransferase (244 aa).

S-adenosyl-L-methionine-binding positions include Gly-113 and 133 to 138 (IGDYVL).

Belongs to the RNA methyltransferase TrmD family. As to quaternary structure, homodimer.

The protein resides in the cytoplasm. It catalyses the reaction guanosine(37) in tRNA + S-adenosyl-L-methionine = N(1)-methylguanosine(37) in tRNA + S-adenosyl-L-homocysteine + H(+). Its function is as follows. Specifically methylates guanosine-37 in various tRNAs. The polypeptide is tRNA (guanine-N(1)-)-methyltransferase (Bacillus cereus (strain B4264)).